Reading from the N-terminus, the 455-residue chain is Indoleacetamide hydrolase (455 aa).

Active-site charge relay system residues include lysine 71 and serine 146. The Acyl-ester intermediate role is filled by serine 170.

Belongs to the amidase family.

It participates in plant hormone metabolism; auxin biosynthesis. In terms of biological role, hydrolyzes indole-3-acetamide (IAM) into indole-3-acetic acid (IAA). This Pseudomonas savastanoi (Pseudomonas syringae pv. savastanoi) protein is Indoleacetamide hydrolase (iaaH).